The chain runs to 380 residues: MSDSPIKYRLIKKEKHTGARLGEIITPHGTFPTPMFMPVGTQATVKTQSPEELKEMGSGIILSNTYHLWLRPGDELIARAGGLHKFMNWDQPILTDSGGFQVYSLADSRNITEEGVTFKNHLNGSKMFLSPEKAISIQNNLGSDIMMSFDECPQFYQPYDYVKKSIERTSRWAERGLKAHRRPHDQGLFGIVQGAGFEDLRRQSAHDLVSMDFSGYSIGGLAVGETHEEMNAVLDFTTQLLPENKPRYLMGVGAPDSLIDGVIRGVDMFDCVLPTRIARNGTCMTSQGRLVVKNAQFAEDFTPLDPECDCYTCNNYTRAYLRHLLKADETFGIRLTSYHNLYFLLNLMKQVRQAIMDDNLLEFRKYFVEKYGYNKSGRNF.

Asp-96 acts as the Proton acceptor in catalysis. Substrate is bound by residues 96-100 (DSGGF), Asp-150, Gln-193, and Gly-220. The tract at residues 251-257 (GVGAPDS) is RNA binding. Catalysis depends on Asp-270, which acts as the Nucleophile. The segment at 275–279 (TRIAR) is RNA binding; important for wobble base 34 recognition. Residues Cys-308, Cys-310, Cys-313, and His-339 each coordinate Zn(2+).

The protein belongs to the queuine tRNA-ribosyltransferase family. In terms of assembly, homodimer. Within each dimer, one monomer is responsible for RNA recognition and catalysis, while the other monomer binds to the replacement base PreQ1. Zn(2+) is required as a cofactor.

It carries out the reaction 7-aminomethyl-7-carbaguanine + guanosine(34) in tRNA = 7-aminomethyl-7-carbaguanosine(34) in tRNA + guanine. It participates in tRNA modification; tRNA-queuosine biosynthesis. Catalyzes the base-exchange of a guanine (G) residue with the queuine precursor 7-aminomethyl-7-deazaguanine (PreQ1) at position 34 (anticodon wobble position) in tRNAs with GU(N) anticodons (tRNA-Asp, -Asn, -His and -Tyr). Catalysis occurs through a double-displacement mechanism. The nucleophile active site attacks the C1' of nucleotide 34 to detach the guanine base from the RNA, forming a covalent enzyme-RNA intermediate. The proton acceptor active site deprotonates the incoming PreQ1, allowing a nucleophilic attack on the C1' of the ribose to form the product. After dissociation, two additional enzymatic reactions on the tRNA convert PreQ1 to queuine (Q), resulting in the hypermodified nucleoside queuosine (7-(((4,5-cis-dihydroxy-2-cyclopenten-1-yl)amino)methyl)-7-deazaguanosine). In Streptococcus pneumoniae (strain Taiwan19F-14), this protein is Queuine tRNA-ribosyltransferase.